The following is a 219-amino-acid chain: GTP-binding protein Rab-3D (219 aa).

Residue Ala2 is modified to N-acetylalanine. 29-37 lines the GDP pocket; the sequence is GNSSVGKTS. Ser31, Ser32, Val33, Gly34, Lys35, Thr36, Ser37, Pro49, and Ser53 together coordinate GTP. Position 36 (Thr36) interacts with Mg(2+). Positions 49-58 match the Switch 1 motif; sequence PAFVSTVGID. Mg(2+) is bound by residues Thr54 and Asp77. Position 80 (Gly80) interacts with GTP. A Switch 2 motif is present at residues 80-96; sequence GQERYRTITTAYYRGAM. Thr86 is subject to Phosphothreonine. Residues Asn135, Lys136, Asp138, Ala166, and Lys167 each contribute to the GTP site. GDP contacts are provided by residues 135 to 138 and 165 to 167; these read NKCD and SAK. Residue Ser190 is modified to Phosphoserine. The segment at 190 to 219 is disordered; the sequence is SLEPSSSPGSNGKGPALGDTPPPQPSSCGC. A compositionally biased stretch (low complexity) spans 193–203; it reads PSSSPGSNGKG. The span at 209-219 shows a compositional bias: pro residues; the sequence is TPPPQPSSCGC. Residues Cys217 and Cys219 are each lipidated (S-geranylgeranyl cysteine). A Cysteine methyl ester; partial modification is found at Cys219.

This sequence belongs to the small GTPase superfamily. Rab family. As to quaternary structure, interacts with RIMS1, RIMS2, RPH3A and RPH3AL. Interacts with RAB3IP. The GTP-bound form interacts with REP15. Interacts with CHM; phosphorylation at Thr-86 disrupts this interaction. Interacts with MADD (via uDENN domain); the GTP-bound form is preferred for interaction. Mg(2+) is required as a cofactor. Post-translationally, in fetal glands the majority of the proteins are methylated, whereas in neonatal and adult glands, only 50% are methylated. In terms of processing, phosphorylation of Thr-86 in the switch II region by LRRK2 prevents the association of RAB regulatory proteins, including CHM. Highest levels found in lung.

It localises to the cell membrane. It carries out the reaction GTP + H2O = GDP + phosphate + H(+). Its activity is regulated as follows. Regulated by guanine nucleotide exchange factors (GEFs) which promote the exchange of bound GDP for free GTP. Regulated by GTPase activating proteins (GAPs) which increase the GTP hydrolysis activity. Inhibited by GDP dissociation inhibitors (GDIs) which prevent Rab-GDP dissociation. In terms of biological role, the small GTPases Rab are key regulators of intracellular membrane trafficking, from the formation of transport vesicles to their fusion with membranes. Rabs cycle between an inactive GDP-bound form and an active GTP-bound form that is able to recruit to membranes different sets of downstream effectors directly responsible for vesicle formation, movement, tethering and fusion. RAB3D may be involved in the insulin-induced exocytosis of GLUT4-containing vesicles in adipocytes. This Rattus norvegicus (Rat) protein is GTP-binding protein Rab-3D.